Reading from the N-terminus, the 209-residue chain is Ribosomal RNA large subunit methyltransferase E (209 aa).

Positions 63, 65, 83, 99, and 124 each coordinate S-adenosyl-L-methionine. Catalysis depends on Lys-164, which acts as the Proton acceptor.

This sequence belongs to the class I-like SAM-binding methyltransferase superfamily. RNA methyltransferase RlmE family.

The protein localises to the cytoplasm. The catalysed reaction is uridine(2552) in 23S rRNA + S-adenosyl-L-methionine = 2'-O-methyluridine(2552) in 23S rRNA + S-adenosyl-L-homocysteine + H(+). In terms of biological role, specifically methylates the uridine in position 2552 of 23S rRNA at the 2'-O position of the ribose in the fully assembled 50S ribosomal subunit. This is Ribosomal RNA large subunit methyltransferase E from Shewanella piezotolerans (strain WP3 / JCM 13877).